The chain runs to 131 residues: Profilin (131 aa).

The protein belongs to the profilin family. In terms of assembly, occurs in many kinds of cells as a complex with monomeric actin in a 1:1 ratio.

The protein localises to the cytoplasm. Its subcellular location is the cytoskeleton. In terms of biological role, binds to actin and affects the structure of the cytoskeleton. At high concentrations, profilin prevents the polymerization of actin, whereas it enhances it at low concentrations. By binding to PIP2, it inhibits the formation of IP3 and DG. This Pyrus communis (Pear) protein is Profilin.